Consider the following 275-residue polypeptide: Formamidopyrimidine-DNA glycosylase (275 aa).

The active-site Schiff-base intermediate with DNA is the P2. The active-site Proton donor is E3. K58 (proton donor; for beta-elimination activity) is an active-site residue. The DNA site is built by H93, R111, and R156. An FPG-type zinc finger spans residues 241–275 (FAYDRAGLPCRVCGTPIRQIVQGQRSTYFCPTCQR). R265 acts as the Proton donor; for delta-elimination activity in catalysis.

This sequence belongs to the FPG family. Monomer. The cofactor is Zn(2+).

It carries out the reaction Hydrolysis of DNA containing ring-opened 7-methylguanine residues, releasing 2,6-diamino-4-hydroxy-5-(N-methyl)formamidopyrimidine.. The catalysed reaction is 2'-deoxyribonucleotide-(2'-deoxyribose 5'-phosphate)-2'-deoxyribonucleotide-DNA = a 3'-end 2'-deoxyribonucleotide-(2,3-dehydro-2,3-deoxyribose 5'-phosphate)-DNA + a 5'-end 5'-phospho-2'-deoxyribonucleoside-DNA + H(+). In terms of biological role, involved in base excision repair of DNA damaged by oxidation or by mutagenic agents. Acts as a DNA glycosylase that recognizes and removes damaged bases. Has a preference for oxidized purines, such as 7,8-dihydro-8-oxoguanine (8-oxoG). Has AP (apurinic/apyrimidinic) lyase activity and introduces nicks in the DNA strand. Cleaves the DNA backbone by beta-delta elimination to generate a single-strand break at the site of the removed base with both 3'- and 5'-phosphates. This is Formamidopyrimidine-DNA glycosylase from Burkholderia vietnamiensis (strain G4 / LMG 22486) (Burkholderia cepacia (strain R1808)).